Reading from the N-terminus, the 180-residue chain is Putative 3-methyladenine DNA glycosylase (180 aa).

The protein belongs to the DNA glycosylase MPG family.

In Wolbachia pipientis wMel, this protein is Putative 3-methyladenine DNA glycosylase.